Here is a 321-residue protein sequence, read N- to C-terminus: Histidine N-alpha-methyltransferase (321 aa).

An L-histidine-binding site is contributed by Tyr56. S-adenosyl-L-methionine contacts are provided by residues Gly86, Lys92, Asp113, and 141–142 (DF). Residues Asn166, Tyr206, and 282–284 (EVS) each bind L-histidine.

The protein belongs to the methyltransferase superfamily. EgtD family. As to quaternary structure, monomer.

The enzyme catalyses L-histidine + 3 S-adenosyl-L-methionine = hercynine + 3 S-adenosyl-L-homocysteine + 3 H(+). It functions in the pathway amino-acid biosynthesis; ergothioneine biosynthesis. Functionally, catalyzes the SAM-dependent triple methylation of the alpha-amino group of histidine to form hercynine, a step in the biosynthesis pathway of ergothioneine. Among all the proteinogenic amino acids, only L-histidine is a substrate. This Mycolicibacterium smegmatis (strain ATCC 700084 / mc(2)155) (Mycobacterium smegmatis) protein is Histidine N-alpha-methyltransferase.